Consider the following 327-residue polypeptide: Ribosomal RNA small subunit methyltransferase H (327 aa).

S-adenosyl-L-methionine contacts are provided by residues 36–38 (GGH), Asp61, Phe88, Asp114, and Gln121.

Belongs to the methyltransferase superfamily. RsmH family.

It is found in the cytoplasm. The catalysed reaction is cytidine(1402) in 16S rRNA + S-adenosyl-L-methionine = N(4)-methylcytidine(1402) in 16S rRNA + S-adenosyl-L-homocysteine + H(+). Specifically methylates the N4 position of cytidine in position 1402 (C1402) of 16S rRNA. This is Ribosomal RNA small subunit methyltransferase H from Chlorobium luteolum (strain DSM 273 / BCRC 81028 / 2530) (Pelodictyon luteolum).